A 367-amino-acid polypeptide reads, in one-letter code: FAD synthetase 2, chloroplastic (367 aa).

The N-terminal 57 residues, 1–57 (MLCGGSRVLQHLSDHNHHNSIGLGLGFCGAKIVQLSSFFLRPSQAMAKSHHFSRKLR), are a transit peptide targeting the chloroplast.

The cofactor is Mg(2+).

It localises to the plastid. The protein localises to the chloroplast. The catalysed reaction is FMN + ATP + H(+) = FAD + diphosphate. It participates in cofactor biosynthesis; FAD biosynthesis; FAD from FMN: step 1/1. In terms of biological role, catalyzes the adenylation of flavin mononucleotide (FMN) to form flavin adenine dinucleotide (FAD) coenzyme. In Arabidopsis thaliana (Mouse-ear cress), this protein is FAD synthetase 2, chloroplastic.